The primary structure comprises 705 residues: Polyribonucleotide nucleotidyltransferase (705 aa).

Asp-486 and Asp-492 together coordinate Mg(2+). The 60-residue stretch at 553–612 (PRIHTMKVSQDKIRDIIGKGGATIRQLTEETGTTIEIEDDGTVKIAATSGEQAEDAINRI) folds into the KH domain. Residues 622-690 (GTLYTGKVVR…RQGRVRLSIK (69 aa)) form the S1 motif domain.

The protein belongs to the polyribonucleotide nucleotidyltransferase family. As to quaternary structure, component of the RNA degradosome, which is a multiprotein complex involved in RNA processing and mRNA degradation. Mg(2+) serves as cofactor.

It localises to the cytoplasm. The enzyme catalyses RNA(n+1) + phosphate = RNA(n) + a ribonucleoside 5'-diphosphate. Involved in mRNA degradation. Catalyzes the phosphorolysis of single-stranded polyribonucleotides processively in the 3'- to 5'-direction. The sequence is that of Polyribonucleotide nucleotidyltransferase from Colwellia psychrerythraea (strain 34H / ATCC BAA-681) (Vibrio psychroerythus).